The following is a 297-amino-acid chain: Calponin-1 (297 aa).

Positions histidine 28–alanine 131 constitute a Calponin-homology (CH) domain. The residue at position 48 (serine 48) is a Phosphoserine. Calponin-like repeat units lie at residues isoleucine 164–tyrosine 189, isoleucine 204–phenylalanine 229, and valine 243–tyrosine 268. Threonine 170 is subject to Phosphothreonine; by ROCK2. A Phosphoserine; by ROCK2 modification is found at serine 175. Residues threonine 180 and threonine 184 each carry the phosphothreonine; by ROCK2 modification. A Phosphothreonine; by ROCK2 modification is found at threonine 259.

It belongs to the calponin family. In terms of assembly, part of cGMP kinase signaling complex at least composed of ACTA2/alpha-actin, CNN1/calponin H1, PLN/phospholamban, PRKG1 and ITPR1. In terms of tissue distribution, smooth muscle, and tissues containing significant amounts of smooth muscle.

Functionally, thin filament-associated protein that is implicated in the regulation and modulation of smooth muscle contraction. It is capable of binding to actin, calmodulin and tropomyosin. The interaction of calponin with actin inhibits the actomyosin Mg-ATPase activity. This is Calponin-1 (Cnn1) from Rattus norvegicus (Rat).